Reading from the N-terminus, the 101-residue chain is MAAEVKTVIKPLGDRVVVKRIEEEPKTKGGIVLPDTAKEKPQKGKVIAVGTGRVLENGQRVPLEVKEGDIVVFAKYGGTEIEIDGEEYVILSERDLLAVLQ.

It belongs to the GroES chaperonin family. As to quaternary structure, heptamer of 7 subunits arranged in a ring. Interacts with the chaperonin GroEL.

It is found in the cytoplasm. Functionally, together with the chaperonin GroEL, plays an essential role in assisting protein folding. The GroEL-GroES system forms a nano-cage that allows encapsulation of the non-native substrate proteins and provides a physical environment optimized to promote and accelerate protein folding. GroES binds to the apical surface of the GroEL ring, thereby capping the opening of the GroEL channel. The sequence is that of Co-chaperonin GroES from Thermus thermophilus (strain ATCC BAA-163 / DSM 7039 / HB27).